Consider the following 92-residue polypeptide: Small ribosomal subunit protein uS19c (92 aa).

This sequence belongs to the universal ribosomal protein uS19 family.

It localises to the plastid. The protein localises to the chloroplast. Its function is as follows. Protein S19 forms a complex with S13 that binds strongly to the 16S ribosomal RNA. This Cicer arietinum (Chickpea) protein is Small ribosomal subunit protein uS19c.